The primary structure comprises 206 residues: dITP/XTP pyrophosphatase (206 aa).

7–12 (TSNKDK) serves as a coordination point for substrate. The active-site Proton acceptor is Asp74. Asp74 contacts Mg(2+). Substrate is bound by residues Ser75, 159–162 (FGYD), Lys182, and 187–188 (HR).

This sequence belongs to the HAM1 NTPase family. As to quaternary structure, homodimer. Requires Mg(2+) as cofactor.

The catalysed reaction is XTP + H2O = XMP + diphosphate + H(+). It catalyses the reaction dITP + H2O = dIMP + diphosphate + H(+). It carries out the reaction ITP + H2O = IMP + diphosphate + H(+). In terms of biological role, pyrophosphatase that catalyzes the hydrolysis of nucleoside triphosphates to their monophosphate derivatives, with a high preference for the non-canonical purine nucleotides XTP (xanthosine triphosphate), dITP (deoxyinosine triphosphate) and ITP. Seems to function as a house-cleaning enzyme that removes non-canonical purine nucleotides from the nucleotide pool, thus preventing their incorporation into DNA/RNA and avoiding chromosomal lesions. In Campylobacter hominis (strain ATCC BAA-381 / DSM 21671 / CCUG 45161 / LMG 19568 / NCTC 13146 / CH001A), this protein is dITP/XTP pyrophosphatase.